The primary structure comprises 181 residues: Cytidylate kinase (181 aa).

12-20 (GLAGSGTTT) provides a ligand contact to ATP.

Belongs to the cytidylate kinase family. Type 2 subfamily.

Its subcellular location is the cytoplasm. It catalyses the reaction CMP + ATP = CDP + ADP. The catalysed reaction is dCMP + ATP = dCDP + ADP. This is Cytidylate kinase (cmk) from Pyrococcus abyssi (strain GE5 / Orsay).